The sequence spans 204 residues: Histone chaperone ASF1A (204 aa).

An interaction with histone H3, CHAF1B, and HIRA region spans residues 1–156; that stretch reads MAKVQVNNVV…TRFHINWEDN (156 aa). The short motif at 31 to 37 is the Required for interaction with HIRA element; it reads IEDLSED. Positions 155 to 204 are required for interaction with HIRA; that stretch reads DNTEKLEDAESSNPNLQSLLSTDALPSASKGWSTSENSLNVMLESHMDCM. S192 bears the Phosphoserine mark.

This sequence belongs to the ASF1 family. As to quaternary structure, interacts with histone H3 (via C-terminus), including histone H3.1, H3.2 and H3.3, and histone H4; the interaction with H3 is direct. Probably interacts with the heterodimeric form of H3-H4 taking the place of the second dimer. Interacts with the CHAF1A, CHAF1B and RBBP4 subunits of the CAF-1 complex. Interacts with CABIN1, HAT1, HIRA, NASP, TAF1 and UBN1. Found in a soluble complex with NASP and histones H3 and H4; the interaction with NASP is probably indirect and mediated by H3-H4. Interacts with CDAN1. Found in a cytosolic complex with IPO4 and histones H3 and H4. Interacts with CREBBP. Post-translationally, phosphorylated by TLK1 and TLK2. Highly phosphorylated in S-phase and at lower levels in M-phase. TLK2-mediated phosphorylation at Ser-192 prevents proteasome-dependent degradation. Phosphorylation at Ser-192 by PRKDC in response to DNA damage promotes the histone chaperone activity and ability to replace histones at double-strand breaks (DSBs) at stalled or collapsed replication forks, leading to RAD51 recruitment.

The protein localises to the nucleus. The protein resides in the chromosome. Histone chaperone that facilitates histone deposition and histone exchange and removal during nucleosome assembly and disassembly. Cooperates with chromatin assembly factor 1 (CAF-1) to promote replication-dependent chromatin assembly and with HIRA to promote replication-independent chromatin assembly. Promotes homologous recombination-mediated repair of double-strand breaks (DSBs) at stalled or collapsed replication forks: acts by mediating histone replacement at DSBs, leading to recruitment of the MMS22L-TONSL complex and subsequent loading of RAD51. Also involved in the nuclear import of the histone H3-H4 dimer together with importin-4 (IPO4): specifically recognizes and binds newly synthesized histones with the monomethylation of H3 'Lys-9' and acetylation at 'Lys-14' (H3K9me1K14ac) marks, and diacetylation at 'Lys-5' and 'Lys-12' of H4 (H4K5K12ac) marks in the cytosol. Required for the formation of senescence-associated heterochromatin foci (SAHF) and efficient senescence-associated cell cycle exit. The polypeptide is Histone chaperone ASF1A (Mus musculus (Mouse)).